The chain runs to 270 residues: MVYTATPLEKKVTVNTLRKMKADKEKFITVALYDAPMAAMAQKCGVEVVLIGDSLGMTVLGYDSTVPVTMEQMIYHIEAVARGNSRSLIIGDLPFMTYATVEQTMINATRVMQAGAHMVKMEGGAWLVDSVRMLSERGIPVCAHLGLTPQSVNKFGGFRVQGRSEEQGEQIIADALALEEAGADLLVLECIPAELGARVTQALSIPTIGIGAGIGTDAQVLVINDILGLTEFPPKFSKNFLLEAKDIPGALQKYAADVKSGVFPGPEQQF.

Mg(2+) contacts are provided by Asp-53 and Asp-92. 3-methyl-2-oxobutanoate contacts are provided by residues 53–54 (DS), Asp-92, and Lys-120. Glu-122 contributes to the Mg(2+) binding site. The active-site Proton acceptor is Glu-189.

Belongs to the PanB family. Homodecamer; pentamer of dimers. The cofactor is Mg(2+).

The protein resides in the cytoplasm. It carries out the reaction 3-methyl-2-oxobutanoate + (6R)-5,10-methylene-5,6,7,8-tetrahydrofolate + H2O = 2-dehydropantoate + (6S)-5,6,7,8-tetrahydrofolate. Its pathway is cofactor biosynthesis; (R)-pantothenate biosynthesis; (R)-pantoate from 3-methyl-2-oxobutanoate: step 1/2. In terms of biological role, catalyzes the reversible reaction in which hydroxymethyl group from 5,10-methylenetetrahydrofolate is transferred onto alpha-ketoisovalerate to form ketopantoate. The polypeptide is 3-methyl-2-oxobutanoate hydroxymethyltransferase (Saccharophagus degradans (strain 2-40 / ATCC 43961 / DSM 17024)).